Reading from the N-terminus, the 373-residue chain is tRNA-specific 2-thiouridylase MnmA (373 aa).

ATP is bound by residues Gly-12–Ser-19 and Met-38. Residues Asn-98–Asp-100 are interaction with target base in tRNA. Cys-103 acts as the Nucleophile in catalysis. A disulfide bridge connects residues Cys-103 and Cys-200. Gly-127 is an ATP binding site. Residues Lys-150–Gln-152 form an interaction with tRNA region. Cys-200 functions as the Cysteine persulfide intermediate in the catalytic mechanism. The tract at residues Arg-312–Tyr-313 is interaction with tRNA.

Belongs to the MnmA/TRMU family.

It localises to the cytoplasm. The enzyme catalyses S-sulfanyl-L-cysteinyl-[protein] + uridine(34) in tRNA + AH2 + ATP = 2-thiouridine(34) in tRNA + L-cysteinyl-[protein] + A + AMP + diphosphate + H(+). Functionally, catalyzes the 2-thiolation of uridine at the wobble position (U34) of tRNA, leading to the formation of s(2)U34. The chain is tRNA-specific 2-thiouridylase MnmA from Streptococcus sanguinis (strain SK36).